The sequence spans 744 residues: Catalase-peroxidase (744 aa).

The first 22 residues, 1 to 22 (MSPRARRCTDRCARMSERSMNA), serve as a signal peptide directing secretion. The segment at residues 114 to 234 (WHSAGTYRLA…LGATEMGLIY (121 aa)) is a cross-link (tryptophyl-tyrosyl-methioninium (Trp-Tyr) (with M-260)). His115 functions as the Proton acceptor in the catalytic mechanism. Residues 234-260 (YVNPEGPDRNGDPISAAKFIRETFARM) constitute a cross-link (tryptophyl-tyrosyl-methioninium (Tyr-Met) (with W-114)). Residue His275 coordinates heme b.

This sequence belongs to the peroxidase family. Peroxidase/catalase subfamily. Homodimer or homotetramer. Heme b is required as a cofactor. In terms of processing, formation of the three residue Trp-Tyr-Met cross-link is important for the catalase, but not the peroxidase activity of the enzyme.

It carries out the reaction H2O2 + AH2 = A + 2 H2O. The enzyme catalyses 2 H2O2 = O2 + 2 H2O. In terms of biological role, bifunctional enzyme with both catalase and broad-spectrum peroxidase activity. In Azorhizobium caulinodans (strain ATCC 43989 / DSM 5975 / JCM 20966 / LMG 6465 / NBRC 14845 / NCIMB 13405 / ORS 571), this protein is Catalase-peroxidase.